The following is a 1375-amino-acid chain: Patatin-like phospholipase domain-containing protein 6 (1375 aa).

The tract at residues 1 to 20 (MEAPLQTGMMGTSSHGLATN) is disordered. Topologically, residues 1 to 59 (MEAPLQTGMMGTSSHGLATNSSGAKVAERDGFQDVLAPGEGSAGRICGAQPVPFVPQVL) are lumenal. The span at 9–20 (MMGTSSHGLATN) shows a compositional bias: polar residues. Asparagine 20 is a glycosylation site (N-linked (GlcNAc...) asparagine). A helical membrane pass occupies residues 60 to 80 (GVMIGAGVAVVVTAVLILLVV). Residues 81–1375 (RRLRVPKTPA…QEPPGSATDA (1295 aa)) lie on the Cytoplasmic side of the membrane. 195 to 322 (VLGHFEKPLF…VRVVQIIMVR (128 aa)) lines the a nucleoside 3',5'-cyclic phosphate pocket. Disordered stretches follow at residues 352 to 436 (FPSP…RSDF) and 449 to 472 (LQEE…PREQ). Residue serine 354 is modified to Phosphoserine. Over residues 359–376 (TRTSPVRGSKRMVSTSAT) the composition is skewed to polar residues. The residue at position 361 (threonine 361) is a Phosphothreonine. A phosphoserine mark is found at serine 362 and serine 372. Residues 384–398 (GRPPDPTGAPLPGPT) show a composition bias toward pro residues. Serine 420 is modified (phosphoserine). A Phosphothreonine modification is found at threonine 464. A nucleoside 3',5'-cyclic phosphate is bound by residues 511–633 (ELAK…VAAR) and 629–749 (TVAA…LSQK). The PNPLA domain occupies 981-1147 (LVLGGGGARG…INNLPADIAR (167 aa)). The GXGXXG signature appears at 985–990 (GGGARG). The GXSXG signature appears at 1012 to 1016 (GTSIG). Catalysis depends on serine 1014, which acts as the Nucleophile. Aspartate 1134 serves as the catalytic Proton acceptor. Residues 1134–1136 (DGG) carry the DGA/G motif. The segment at 1306–1375 (SYVSDGCADG…QEPPGSATDA (70 aa)) is disordered. Acidic residues predominate over residues 1313 to 1329 (ADGEESDCLTEYEEDAG).

It belongs to the NTE family. Post-translationally, glycosylated. In terms of tissue distribution, expressed in brain, placenta, kidney, neuron and skeletal muscle. Expressed in the developing eye, pituitary and brain.

It localises to the endoplasmic reticulum membrane. The enzyme catalyses a 1-acyl-sn-glycero-3-phosphocholine + H2O = sn-glycerol 3-phosphocholine + a fatty acid + H(+). The catalysed reaction is 1-(9Z-octadecenoyl)-sn-glycero-3-phosphocholine + H2O = sn-glycerol 3-phosphocholine + (9Z)-octadecenoate + H(+). It catalyses the reaction 1-hexadecanoylglycerol + H2O = glycerol + hexadecanoate + H(+). It carries out the reaction 2-hexadecanoylglycerol + H2O = glycerol + hexadecanoate + H(+). The enzyme catalyses 1-(9Z-octadecenoyl)-glycerol + H2O = glycerol + (9Z)-octadecenoate + H(+). The catalysed reaction is 2-(9Z-octadecenoyl)-glycerol + H2O = glycerol + (9Z)-octadecenoate + H(+). It catalyses the reaction 2-(5Z,8Z,11Z,14Z-eicosatetraenoyl)-glycerol + H2O = glycerol + (5Z,8Z,11Z,14Z)-eicosatetraenoate + H(+). It carries out the reaction 1-hexadecanoyl-sn-glycero-3-phosphate + H2O = sn-glycerol 3-phosphate + hexadecanoate + H(+). The enzyme catalyses 1-hexadecanoyl-sn-glycero-3-phosphocholine + H2O = sn-glycerol 3-phosphocholine + hexadecanoate + H(+). With respect to regulation, inhibited by a series a OPs such as mipafox (MPX), phenyl saligenin phosphate (PSP), phenyl dipentyl phosphinate (PDPP), diisopropyl fluorophosphate and paraoxon. Functionally, phospholipase B that deacylates intracellular phosphatidylcholine (PtdCho), generating glycerophosphocholine (GroPtdCho). This deacylation occurs at both sn-2 and sn-1 positions of PtdCho. Catalyzes the hydrolysis of several naturally occurring membrane-associated lipids. Hydrolyzes lysophospholipids and monoacylglycerols, preferring the 1-acyl to the 2-acyl isomer. Does not catalyze hydrolysis of di- or triacylglycerols or fatty acid amides. The sequence is that of Patatin-like phospholipase domain-containing protein 6 from Homo sapiens (Human).